The following is a 440-amino-acid chain: COP9 signalosome complex subunit 5 (440 aa).

Positions 71 to 218 constitute an MPN domain; sequence VLISKLSCEK…MGAFRTIESK (148 aa). His164, His166, and Asp177 together coordinate Zn(2+). The JAMM motif motif lies at 164-177; it reads HSHPGYDCWLSNID. Residues 319 to 341 show a composition bias toward polar residues; that stretch reads TQRGDSTETSSFGSMFSGDNTSD. 2 disordered regions span residues 319-343 and 375-399; these read TQRG…SDVD and SSRS…CHDE.

This sequence belongs to the peptidase M67A family. CSN5 subfamily. As to quaternary structure, component of a COP9 signalosome-like (CSN) complex, composed of at least RRI1/CSN5, CSN9, RRI2/CSN10, PCI8/CSN11, CSN12 and CSI1. Within this complex it probably interacts directly with CSN12. Also interacts with RPN5. A divalent metal cation is required as a cofactor.

The protein localises to the cytoplasm. It localises to the nucleus. Catalytic component of the COP9 signalosome (CSN) complex that acts as an regulator of the ubiquitin (Ubl) conjugation pathway by mediating the deneddylation of the cullin subunit of SCF-type E3 ubiquitin-protein ligase complexes. The CSN complex is involved in the regulation of the mating pheromone response. In Saccharomyces cerevisiae (strain ATCC 204508 / S288c) (Baker's yeast), this protein is COP9 signalosome complex subunit 5 (RRI1).